The sequence spans 324 residues: Glyoxylate/hydroxypyruvate reductase B (324 aa).

Residues Arg-237 and Glu-266 contribute to the active site. Catalysis depends on His-285, which acts as the Proton donor.

It belongs to the D-isomer specific 2-hydroxyacid dehydrogenase family. GhrB subfamily. Homodimer.

The protein resides in the cytoplasm. The catalysed reaction is glycolate + NADP(+) = glyoxylate + NADPH + H(+). It carries out the reaction (R)-glycerate + NAD(+) = 3-hydroxypyruvate + NADH + H(+). The enzyme catalyses (R)-glycerate + NADP(+) = 3-hydroxypyruvate + NADPH + H(+). In terms of biological role, catalyzes the NADPH-dependent reduction of glyoxylate and hydroxypyruvate into glycolate and glycerate, respectively. The chain is Glyoxylate/hydroxypyruvate reductase B from Salmonella paratyphi B (strain ATCC BAA-1250 / SPB7).